Here is a 185-residue protein sequence, read N- to C-terminus: Ribosome-recycling factor (185 aa).

The protein belongs to the RRF family.

The protein resides in the cytoplasm. Its function is as follows. Responsible for the release of ribosomes from messenger RNA at the termination of protein biosynthesis. May increase the efficiency of translation by recycling ribosomes from one round of translation to another. The polypeptide is Ribosome-recycling factor (Trichlorobacter lovleyi (strain ATCC BAA-1151 / DSM 17278 / SZ) (Geobacter lovleyi)).